We begin with the raw amino-acid sequence, 354 residues long: Methylthioribose-1-phosphate isomerase (354 aa).

Substrate-binding positions include 58-60, Arg-101, and Gln-204; that span reads RGA. Asp-245 functions as the Proton donor in the catalytic mechanism. Residue 255–256 coordinates substrate; sequence NK.

Belongs to the eIF-2B alpha/beta/delta subunits family. MtnA subfamily.

It carries out the reaction 5-(methylsulfanyl)-alpha-D-ribose 1-phosphate = 5-(methylsulfanyl)-D-ribulose 1-phosphate. The protein operates within amino-acid biosynthesis; L-methionine biosynthesis via salvage pathway; L-methionine from S-methyl-5-thio-alpha-D-ribose 1-phosphate: step 1/6. Its function is as follows. Catalyzes the interconversion of methylthioribose-1-phosphate (MTR-1-P) into methylthioribulose-1-phosphate (MTRu-1-P). The polypeptide is Methylthioribose-1-phosphate isomerase (Xylella fastidiosa (strain M12)).